The following is a 90-amino-acid chain: Inner kinetochore subunit MHF1 (90 aa).

This sequence belongs to the TAF9 family. CENP-S/MHF1 subfamily. In terms of assembly, the MHF histone-fold complex is a heterotetramer of 2 MHF1-MHF2 heterodimers. Together with MPH1/FANCM, forms the FANCM-MHF complex. Component of the inner kinetochore constitutive centromere-associated network (CCAN) (also known as central kinetochore CTF19 complex in yeast), which is composed of at least AME1, CHL4, CNN1, CTF3, CTF19, IML3, MCM16, MCM21, MCM22, MHF1, MHF2, MIF2, NKP1, NKP2, OKP1 and WIP1.

Its function is as follows. dsDNA-binding component of a FANCM-MHF complex involved in DNA damage repair and genome maintenance. FANCM-MHF promotes gene conversion at blocked replication forks, probably by reversal of the stalled fork. Component of the kinetochore, a multiprotein complex that assembles on centromeric DNA and attaches chromosomes to spindle microtubules, mediating chromosome segregation and sister chromatid segregation during meiosis and mitosis. Component of the inner kinetochore constitutive centromere-associated network (CCAN), which serves as a structural platform for outer kinetochore assembly. This chain is Inner kinetochore subunit MHF1, found in Saccharomyces cerevisiae (strain ATCC 204508 / S288c) (Baker's yeast).